The primary structure comprises 455 residues: N(5)-hydroxyornithine:cis-anhydromevalonyl coenzyme A-N(5)-transacylase SIDF (455 aa).

A PTS1-type peroxisomal targeting signal motif is present at residues 453–455 (PKL).

Belongs to the lysine N-acyltransferase mbtK family.

The protein resides in the peroxisome. It participates in siderophore biosynthesis. Its function is as follows. Hydroxyornithine transacylase; part of the gene cluster that mediates the biosynthesis of at least 11 siderophores, including beauverichelin A, dimerumic acid (DA), Na-dimethyl coprogen (NADC), eleutherazine B, ferricrocin (FC), fusarinine A, fusarinine C (FsC), metachelin A, mevalonolactone, rhodotorulic acid (RA) and tenellin. This cocktail of siderophores for iron metabolism is essential for virulence, and more specifically for the fungal virulence in penetrating through the host cuticle. Siderophore synthesis is also involved in conidial germination under iron-deficient conditions. For biosynthesis of fusarinine C, the transacylase SIDF transfers anhydromevalonyl to N(5)-hydroxyornithine. The required anhydromevalonyl-CoA moiety is derived from mevalonate by CoA ligation and dehydration catalyzed by SIDI and sidH respectively. In Beauveria bassiana (strain ARSEF 2860) (White muscardine disease fungus), this protein is N(5)-hydroxyornithine:cis-anhydromevalonyl coenzyme A-N(5)-transacylase SIDF.